Consider the following 210-residue polypeptide: Somatotropin (210 aa).

A signal peptide spans 1 to 23 (MARVLVLLSVVLVSLLVNQGRAS). H38 lines the Zn(2+) pocket. C71 and C183 form a disulfide bridge. E192 lines the Zn(2+) pocket. An intrachain disulfide couples C200 to C208.

The protein belongs to the somatotropin/prolactin family.

The protein resides in the secreted. Its function is as follows. Growth hormone plays an important role in growth control. The chain is Somatotropin (gh) from Cyprinus carpio (Common carp).